Reading from the N-terminus, the 64-residue chain is Metallothionein-like protein 1 (64 aa).

Belongs to the metallothionein superfamily. Type 15 family.

In terms of biological role, metallothioneins have a high content of cysteine residues that bind various heavy metals. This Prunus avium (Cherry) protein is Metallothionein-like protein 1 (MT1).